The following is a 399-amino-acid chain: PCI domain-containing protein 2 (399 aa).

The PCI domain occupies 210–391 (VTYKYYVGRK…QKLVVSKQNP (182 aa)).

This sequence belongs to the CSN12 family.

The protein is PCI domain-containing protein 2 (pcid2) of Danio rerio (Zebrafish).